The following is a 284-amino-acid chain: Putative L-ribulose-5-phosphate 3-epimerase UlaE (284 aa).

The protein belongs to the L-ribulose-5-phosphate 3-epimerase family.

It catalyses the reaction L-ribulose 5-phosphate = L-xylulose 5-phosphate. The protein operates within cofactor degradation; L-ascorbate degradation; D-xylulose 5-phosphate from L-ascorbate: step 3/4. In terms of biological role, catalyzes the isomerization of L-xylulose-5-phosphate to L-ribulose-5-phosphate. Is involved in the anaerobic L-ascorbate utilization. The polypeptide is Putative L-ribulose-5-phosphate 3-epimerase UlaE (Shigella dysenteriae serotype 1 (strain Sd197)).